Consider the following 1176-residue polypeptide: Surface-layer 125 kDa protein (1176 aa).

Positions 1-30 (MAKQNKGRKFFAASATAALVASAIVPVASA) are cleaved as a signal peptide. 3 consecutive SLH domains span residues 31 to 88 (AQLN…LEAE), 89 to 152 (GDVN…DLSE), and 153 to 216 (FADA…PKVD).

It localises to the secreted. The protein localises to the cell wall. Its subcellular location is the S-layer. Functionally, the S-layer is a paracrystalline mono-layered assembly of proteins which coat the surface of bacteria. The polypeptide is Surface-layer 125 kDa protein (Lysinibacillus sphaericus (Bacillus sphaericus)).